The chain runs to 58 residues: UPF0391 membrane protein Sden_3712 (58 aa).

2 consecutive transmembrane segments (helical) span residues 6–26 and 27–47; these read LTFL…IAGA and AAGI…ISLV.

The protein belongs to the UPF0391 family.

The protein localises to the cell membrane. The sequence is that of UPF0391 membrane protein Sden_3712 from Shewanella denitrificans (strain OS217 / ATCC BAA-1090 / DSM 15013).